The chain runs to 806 residues: N-terminal kinase-like protein (806 aa).

Residues 14 to 314 (FELSPEPPEG…PEDFCRHKVL (301 aa)) form the Protein kinase domain. HEAT repeat units lie at residues 350-388 (IIPV…VNTQ), 389-427 (IFPH…LNVE), and 507-545 (ILPV…EDPT). 2 disordered regions span residues 586-642 (RAHP…TADR) and 663-806 (DDWS…RKLD). Positions 601-611 (RPVPEGNPAPA) are enriched in pro residues. Residue serine 752 is modified to Phosphoserine. Positions 752–762 (SWGEDNWEGLE) are enriched in acidic residues. The stretch at 755–795 (EDNWEGLEAESRQVKAELARKKREERRREMEAKRAEKKTTK) forms a coiled coil. Composition is skewed to basic and acidic residues over residues 763 to 773 (AESRQVKAELA) and 780 to 793 (RRRE…EKKT). The tract at residues 791-806 (KKTTKGPMKLGARKLD) is interaction with COPB1.

It belongs to the protein kinase superfamily. Homooligomer. Interacts with GORAB. Interacts with COPA, COPB1 and COPB2. Interacts with AP2B1. As to expression, expressed in diaphragm, quadriceps, thymus, liver, lung, spleen, kidney, heart and brain. Prominently expressed in neurons, and enriched at central nervous system synapses and neuromuscular junctions.

Its subcellular location is the cytoplasm. It is found in the cytoskeleton. The protein resides in the microtubule organizing center. The protein localises to the centrosome. It localises to the endoplasmic reticulum-Golgi intermediate compartment. Its subcellular location is the golgi apparatus. It is found in the cis-Golgi network. Regulates COPI-mediated retrograde protein traffic at the interface between the Golgi apparatus and the endoplasmic reticulum. Involved in the maintenance of the Golgi apparatus morphology. The sequence is that of N-terminal kinase-like protein (Scyl1) from Mus musculus (Mouse).